Consider the following 312-residue polypeptide: Aquaglyceroporin-2 (312 aa).

The next 6 membrane-spanning stretches (helical) occupy residues F78–V98, L104–I124, Y151–A171, G203–C223, V239–A259, and Y286–Y306.

It belongs to the MIP/aquaporin (TC 1.A.8) family.

The protein localises to the membrane. It carries out the reaction glycerol(in) = glycerol(out). The catalysed reaction is H2O(in) = H2O(out). The enzyme catalyses urea(in) = urea(out). In terms of biological role, mediates water and glycerol transport across cell membranes. Permeable to urea. Permeable to methylamine/methylammonium. Permeable to dihydroxyacetone. In Trypanosoma brucei brucei, this protein is Aquaglyceroporin-2.